A 670-amino-acid polypeptide reads, in one-letter code: Major fimbrium tip subunit FimD (670 aa).

The N-terminal stretch at 1–24 (MRTNRILNIICPPILFLLVGFLFG) is a signal peptide. Cys-25 carries the N-palmitoyl cysteine lipid modification. The S-diacylglycerol cysteine moiety is linked to residue Cys-25. The propeptide occupies 25–50 (CVREDIESDMNETSSLFLQVQPYNQR).

It belongs to the FimD family. As to quaternary structure, fimbriae are composed of a major, structural subunit and the minor components FimC, FimD and FimE. Identified in a complex composed of FimC, FimD and FimE (in vitro). The complex interacts with host extracellular matrix proteins, including fibronectin and type I collagen. Interacts with host CXCR4.

Its subcellular location is the fimbrium. It is found in the cell outer membrane. In terms of biological role, probably a component of the fimbrium tip. These long, filamentous pili are attached to the cell surface; they mediate biofilm formation, adhesion onto host cells and onto other bacteria that are part of the oral microbiome. They play an important role in invasion of periodontal tissues and are major virulence factors. FimC, FimD and FimE contribute to interaction with host CXCR4 and thereby down-regulate the TLR2-mediated host immune response. This is Major fimbrium tip subunit FimD from Porphyromonas gingivalis (strain ATCC 33277 / DSM 20709 / CIP 103683 / JCM 12257 / NCTC 11834 / 2561).